The following is a 444-amino-acid chain: Zinc finger CCCH domain-containing protein 63 (444 aa).

3 consecutive C3H1-type zinc fingers follow at residues 56–84 (RIGE…HPAD), 101–129 (RIGQ…HPRE), and 147–175 (RPNE…HPQP). Residues 251-276 (GSSSSDDQQRTAGGAQYYTGSRHSET) form a disordered region. 2 consecutive C3H1-type zinc fingers follow at residues 309 to 337 (RPDQ…HPKE) and 355 to 383 (RPGE…HPMG). The segment at 405–444 (PVPAHSEVSPDNVSGRSRRITHSDSQQIPSGERGTEREAS) is disordered.

The protein is Zinc finger CCCH domain-containing protein 63 of Oryza sativa subsp. japonica (Rice).